Consider the following 48-residue polypeptide: Glycine-rich RNA-binding protein 3 (48 aa).

In Populus euphratica (Euphrates poplar), this protein is Glycine-rich RNA-binding protein 3.